Consider the following 76-residue polypeptide: UPF0346 protein OEOE_1017 (76 aa).

The protein belongs to the UPF0346 family.

This Oenococcus oeni (strain ATCC BAA-331 / PSU-1) protein is UPF0346 protein OEOE_1017.